We begin with the raw amino-acid sequence, 560 residues long: Leiomodin-3 (560 aa).

Residues 1 to 49 (MSEHSRNSDQEELLDEEINEDEILANLSAEELKELQSEMEVMAPDPSLP) form an interaction with tropomyosin alpha region. The stretch at 16–42 (EEINEDEILANLSAEELKELQSEMEVM) forms a coiled coil. 2 disordered regions span residues 45–68 (DPSL…NFNH) and 127–217 (IVAN…SKLD). The span at 142–167 (ETDEEDEEEEDDDDDDEGEDDGEESE) shows a compositional bias: acidic residues. Residues 168-182 (ETNREEEGKAKEQIR) show a composition bias toward basic and acidic residues. Over residues 183-192 (NCENNCQQVT) the composition is skewed to polar residues. The span at 194 to 217 (KAFKEQRDRPEAQEQSEKKISKLD) shows a compositional bias: basic and acidic residues. The stretch at 386–425 (VTNLLTRNQDKQRQKRQEEQKQQQLKEQKKLIAMLENGLG) forms a coiled coil. 2 disordered regions span residues 437–480 (PKPD…KYRT) and 494–530 (QRKS…PPLV). Positions 448–458 (QPPPPRPPNPQ) are enriched in pro residues. Residues 498-516 (RMPEAREPPEKTNLKDVIK) show a composition bias toward basic and acidic residues. The 20-residue stretch at 534–553 (PRDQLLNDIRHSSVAYLKPV) folds into the WH2 domain.

This sequence belongs to the tropomodulin family. May interact with tropomyosin alpha (TPM1/2) N-terminus. Interacts with KLHL40; leading to stabilization. In terms of processing, ubiquitinated, leading to its degradation. Interaction with KLHL40 negatively regulates ubiquitination and degradation. In terms of tissue distribution, expressed in cardiac and at higher levels in skeletal muscles (at protein level).

It localises to the cytoplasm. The protein resides in the myofibril. Its subcellular location is the sarcomere. It is found in the m line. The protein localises to the a band. It localises to the cytoskeleton. Its function is as follows. Essential for the organization of sarcomeric actin thin filaments in skeletal muscle. Increases the rate of actin polymerization. This chain is Leiomodin-3 (LMOD3), found in Homo sapiens (Human).